A 260-amino-acid polypeptide reads, in one-letter code: Snake venom serine proteinase 4a (260 aa).

Residues methionine 1–alanine 18 form the signal peptide. Positions glutamine 19–leucine 24 are excised as a propeptide. The Peptidase S1 domain maps to valine 25–alanine 251. Intrachain disulfides connect cysteine 31–cysteine 163, cysteine 50–cysteine 66, cysteine 98–cysteine 258, cysteine 142–cysteine 212, cysteine 174–cysteine 191, and cysteine 202–cysteine 227. The active-site Charge relay system is histidine 65. Residue asparagine 103 is glycosylated (N-linked (GlcNAc...) asparagine). Catalysis depends on aspartate 110, which acts as the Charge relay system. Serine 206 serves as the catalytic Charge relay system.

It belongs to the peptidase S1 family. Snake venom subfamily. In terms of assembly, monomer. As to expression, expressed by the venom gland.

It localises to the secreted. In terms of biological role, snake venom serine protease that may act in the hemostasis system of the prey. The protein is Snake venom serine proteinase 4a of Crotalus adamanteus (Eastern diamondback rattlesnake).